A 463-amino-acid chain; its full sequence is Glutamate--tRNA ligase 1 (463 aa).

Positions 10-20 (PSPTGYLHIGG) match the 'HIGH' region motif. A 'KMSKS' region motif is present at residues 238 to 242 (KLSKR). An ATP-binding site is contributed by K241.

It belongs to the class-I aminoacyl-tRNA synthetase family. Glutamate--tRNA ligase type 1 subfamily. As to quaternary structure, monomer.

The protein resides in the cytoplasm. It carries out the reaction tRNA(Glu) + L-glutamate + ATP = L-glutamyl-tRNA(Glu) + AMP + diphosphate. Functionally, catalyzes the attachment of glutamate to tRNA(Glu) in a two-step reaction: glutamate is first activated by ATP to form Glu-AMP and then transferred to the acceptor end of tRNA(Glu). The chain is Glutamate--tRNA ligase 1 from Helicobacter pylori (strain Shi470).